We begin with the raw amino-acid sequence, 248 residues long: Aspartate/glutamate leucyltransferase (248 aa).

Belongs to the R-transferase family. Bpt subfamily.

The protein resides in the cytoplasm. It carries out the reaction N-terminal L-glutamyl-[protein] + L-leucyl-tRNA(Leu) = N-terminal L-leucyl-L-glutamyl-[protein] + tRNA(Leu) + H(+). It catalyses the reaction N-terminal L-aspartyl-[protein] + L-leucyl-tRNA(Leu) = N-terminal L-leucyl-L-aspartyl-[protein] + tRNA(Leu) + H(+). Its function is as follows. Functions in the N-end rule pathway of protein degradation where it conjugates Leu from its aminoacyl-tRNA to the N-termini of proteins containing an N-terminal aspartate or glutamate. The chain is Aspartate/glutamate leucyltransferase from Polynucleobacter asymbioticus (strain DSM 18221 / CIP 109841 / QLW-P1DMWA-1) (Polynucleobacter necessarius subsp. asymbioticus).